Reading from the N-terminus, the 107-residue chain is Integration host factor subunit beta (107 aa).

A disordered region spans residues phenylalanine 76–arginine 107. Basic and acidic residues predominate over residues proline 82–aspartate 101.

The protein belongs to the bacterial histone-like protein family. Heterodimer of an alpha and a beta chain.

This protein is one of the two subunits of integration host factor, a specific DNA-binding protein that functions in genetic recombination as well as in transcriptional and translational control. The polypeptide is Integration host factor subunit beta (Burkholderia cenocepacia (strain ATCC BAA-245 / DSM 16553 / LMG 16656 / NCTC 13227 / J2315 / CF5610) (Burkholderia cepacia (strain J2315))).